The primary structure comprises 304 residues: Protein BOBBER 1 (304 aa).

Position 2 is an N-acetylalanine (Ala-2). Residues 54–106 (EDEIVVAVRAAKEKLKKAEKKKAEKESVKPVEKKAEKEIVKLVEKKVEKESVK) are a coiled coil. The interval 111-141 (ASSAEPIEVEKPKEEEEKKESGPIVPNKGNG) is disordered. Basic and acidic residues predominate over residues 118-131 (EVEKPKEEEEKKES). The 90-residue stretch at 142–231 (TDLENYSWIQ…DQMEWWKCCV (90 aa)) folds into the CS domain.

Expressed in all seedling tissues with highest expression levels at the root tip.

The protein localises to the cytoplasm. Its subcellular location is the cytoplasmic granule. Functionally, small heat shock protein required for the establishment of auxin gradients and for patterning of the apical domain of the embryo. Involved in the specification of the cotyledon primordia. Also required for normal inflorescence and floral meristem function, normal developmental patterning and thermotolerance. Acts as a molecular chaperone. In Arabidopsis thaliana (Mouse-ear cress), this protein is Protein BOBBER 1 (BOB1).